The following is a 315-amino-acid chain: Porphobilinogen deaminase (315 aa).

The residue at position 234 (cysteine 234) is an S-(dipyrrolylmethanemethyl)cysteine.

Belongs to the HMBS family. Monomer. Dipyrromethane serves as cofactor.

The catalysed reaction is 4 porphobilinogen + H2O = hydroxymethylbilane + 4 NH4(+). Its pathway is porphyrin-containing compound metabolism; protoporphyrin-IX biosynthesis; coproporphyrinogen-III from 5-aminolevulinate: step 2/4. In terms of biological role, tetrapolymerization of the monopyrrole PBG into the hydroxymethylbilane pre-uroporphyrinogen in several discrete steps. The protein is Porphobilinogen deaminase (hemC) of Mycobacterium leprae (strain TN).